Consider the following 199-residue polypeptide: DNA dC-&gt;dU-editing enzyme APOBEC-3A (199 aa).

The 117-residue stretch at 27–143 folds into the CMP/dCMP-type deaminase domain; that stretch reads GRHKTYLCYE…PLYKEALQML (117 aa). Position 70 (histidine 70) interacts with Zn(2+). The active-site Proton donor is the glutamate 72. Residues cysteine 101 and cysteine 106 each coordinate Zn(2+).

The protein belongs to the cytidine and deoxycytidylate deaminase family. In terms of assembly, interacts with AGO2. Interacts with TRIB3 (via N-terminus). The cofactor is Zn(2+). Expressed in peripheral leukocytes with higher expression in CD14-positive phagocytic cells. Highly expressed in keratinocytes and in periphery blood monocytes. Also detected in non-lymphoid tissues including lung and adipose tissues. Found at high levels in colorectal adenocarcinoma, Burkitt's lymphoma and chronic myelogenous leukemia.

It is found in the nucleus. It localises to the cytoplasm. It catalyses the reaction a 2'-deoxycytidine in single-stranded DNA + H2O + H(+) = a 2'-deoxyuridine in single-stranded DNA + NH4(+). DNA deaminase (cytidine deaminase) with restriction activity against viruses, foreign DNA and mobility of retrotransposons. Exhibits antiviral activity against adeno-associated virus (AAV) and human T-cell leukemia virus type 1 (HTLV-1) and may inhibit the mobility of LTR and non-LTR retrotransposons. Selectively targets single-stranded DNA and can deaminate both methylcytosine and cytosine in foreign DNA. Can induce somatic hypermutation in the nuclear and mitochondrial DNA. May also play a role in the epigenetic regulation of gene expression through the process of active DNA demethylation. This is DNA dC-&gt;dU-editing enzyme APOBEC-3A (APOBEC3A) from Homo sapiens (Human).